The chain runs to 333 residues: 4-hydroxy-3-methylbut-2-enyl diphosphate reductase (333 aa).

Cys-20 is a [4Fe-4S] cluster binding site. (2E)-4-hydroxy-3-methylbut-2-enyl diphosphate is bound by residues His-49 and His-85. 2 residues coordinate dimethylallyl diphosphate: His-49 and His-85. Isopentenyl diphosphate contacts are provided by His-49 and His-85. Cys-107 contributes to the [4Fe-4S] cluster binding site. Position 135 (His-135) interacts with (2E)-4-hydroxy-3-methylbut-2-enyl diphosphate. His-135 provides a ligand contact to dimethylallyl diphosphate. His-135 serves as a coordination point for isopentenyl diphosphate. Glu-137 (proton donor) is an active-site residue. A (2E)-4-hydroxy-3-methylbut-2-enyl diphosphate-binding site is contributed by Thr-176. Cys-206 contacts [4Fe-4S] cluster. (2E)-4-hydroxy-3-methylbut-2-enyl diphosphate is bound by residues Ser-234, Ser-235, Asn-236, and Ser-279. Residues Ser-234, Ser-235, Asn-236, and Ser-279 each coordinate dimethylallyl diphosphate. 4 residues coordinate isopentenyl diphosphate: Ser-234, Ser-235, Asn-236, and Ser-279.

Belongs to the IspH family. [4Fe-4S] cluster serves as cofactor.

It catalyses the reaction isopentenyl diphosphate + 2 oxidized [2Fe-2S]-[ferredoxin] + H2O = (2E)-4-hydroxy-3-methylbut-2-enyl diphosphate + 2 reduced [2Fe-2S]-[ferredoxin] + 2 H(+). The enzyme catalyses dimethylallyl diphosphate + 2 oxidized [2Fe-2S]-[ferredoxin] + H2O = (2E)-4-hydroxy-3-methylbut-2-enyl diphosphate + 2 reduced [2Fe-2S]-[ferredoxin] + 2 H(+). The protein operates within isoprenoid biosynthesis; dimethylallyl diphosphate biosynthesis; dimethylallyl diphosphate from (2E)-4-hydroxy-3-methylbutenyl diphosphate: step 1/1. It functions in the pathway isoprenoid biosynthesis; isopentenyl diphosphate biosynthesis via DXP pathway; isopentenyl diphosphate from 1-deoxy-D-xylulose 5-phosphate: step 6/6. Its function is as follows. Catalyzes the conversion of 1-hydroxy-2-methyl-2-(E)-butenyl 4-diphosphate (HMBPP) into a mixture of isopentenyl diphosphate (IPP) and dimethylallyl diphosphate (DMAPP). Acts in the terminal step of the DOXP/MEP pathway for isoprenoid precursor biosynthesis. This is 4-hydroxy-3-methylbut-2-enyl diphosphate reductase from Rhizobium johnstonii (strain DSM 114642 / LMG 32736 / 3841) (Rhizobium leguminosarum bv. viciae).